The chain runs to 706 residues: Glutamine-dependent NAD(+) synthetase (706 aa).

The 271-residue stretch at 5-275 (VTVATCALNQ…VEVLTATLDL (271 aa)) folds into the CN hydrolase domain. The Proton acceptor; for glutaminase activity role is filled by glutamate 45. The For glutaminase activity role is filled by lysine 114. The Nucleophile; for glutaminase activity role is filled by cysteine 175. Residues 325 to 706 (YHSPAEEISL…RQRQELDGVD (382 aa)) form a ligase region. ATP is bound at residue 355–362 (PLSGGVDS). The active site involves serine 357.

This sequence in the C-terminal section; belongs to the NAD synthetase family. Homohexamer.

The catalysed reaction is deamido-NAD(+) + L-glutamine + ATP + H2O = L-glutamate + AMP + diphosphate + NAD(+) + H(+). It participates in cofactor biosynthesis; NAD(+) biosynthesis; NAD(+) from deamido-NAD(+) (L-Gln route): step 1/1. Its function is as follows. Catalyzes the ATP-dependent amidation of deamido-NAD to form NAD. Uses L-glutamine as a nitrogen source. The sequence is that of Glutamine-dependent NAD(+) synthetase (NADSYN1) from Bos taurus (Bovine).